A 274-amino-acid chain; its full sequence is 2,3,4,5-tetrahydropyridine-2,6-dicarboxylate N-succinyltransferase (274 aa).

It belongs to the transferase hexapeptide repeat family.

The protein localises to the cytoplasm. The catalysed reaction is (S)-2,3,4,5-tetrahydrodipicolinate + succinyl-CoA + H2O = (S)-2-succinylamino-6-oxoheptanedioate + CoA. It functions in the pathway amino-acid biosynthesis; L-lysine biosynthesis via DAP pathway; LL-2,6-diaminopimelate from (S)-tetrahydrodipicolinate (succinylase route): step 1/3. The polypeptide is 2,3,4,5-tetrahydropyridine-2,6-dicarboxylate N-succinyltransferase (Salmonella agona (strain SL483)).